A 908-amino-acid chain; its full sequence is Protein translocase subunit SecA (908 aa).

ATP contacts are provided by residues Q87, 105–109 (GEGKT), and D512. The segment at 865–908 (GGDDGSDEMMAHTPMIRDGDKVGRNDPCPCGSGRKYKQCHGKLS) is disordered. Residues 879-888 (MIRDGDKVGR) show a composition bias toward basic and acidic residues. C892, C894, C903, and H904 together coordinate Zn(2+). A compositionally biased stretch (basic residues) spans 898–908 (RKYKQCHGKLS).

It belongs to the SecA family. As to quaternary structure, monomer and homodimer. Part of the essential Sec protein translocation apparatus which comprises SecA, SecYEG and auxiliary proteins SecDF-YajC and YidC. It depends on Zn(2+) as a cofactor.

It is found in the cell inner membrane. Its subcellular location is the cytoplasm. The enzyme catalyses ATP + H2O + cellular proteinSide 1 = ADP + phosphate + cellular proteinSide 2.. Functionally, part of the Sec protein translocase complex. Interacts with the SecYEG preprotein conducting channel. Has a central role in coupling the hydrolysis of ATP to the transfer of proteins into and across the cell membrane, serving both as a receptor for the preprotein-SecB complex and as an ATP-driven molecular motor driving the stepwise translocation of polypeptide chains across the membrane. The sequence is that of Protein translocase subunit SecA from Shewanella sp. (strain ANA-3).